The chain runs to 134 residues: Small ribosomal subunit protein uS8c (134 aa).

Belongs to the universal ribosomal protein uS8 family. As to quaternary structure, part of the 30S ribosomal subunit.

Its subcellular location is the plastid. The protein localises to the chloroplast. Its function is as follows. One of the primary rRNA binding proteins, it binds directly to 16S rRNA central domain where it helps coordinate assembly of the platform of the 30S subunit. The protein is Small ribosomal subunit protein uS8c (rps8) of Coffea arabica (Arabian coffee).